An 851-amino-acid chain; its full sequence is Envelope glycoprotein gp160 (851 aa).

The signal sequence occupies residues Met-1–Glu-32. At Lys-33–Leu-679 the chain is on the extracellular side. Cys-54 and Cys-74 form a disulfide bridge. Residues Asn-88, Asn-136, Asn-141, Asn-156, Asn-160, Asn-186, Asn-197, Asn-230, Asn-234, Asn-241, Asn-262, Asn-276, Asn-295, Asn-301, Asn-332, Asn-339, and Asn-356 are each glycosylated (N-linked (GlcNAc...) asparagine; by host). 5 disulfide bridges follow: Cys-119/Cys-205, Cys-126/Cys-196, Cys-131/Cys-157, Cys-218/Cys-247, and Cys-228/Cys-239. Positions Cys-131 to Asn-156 are V1. Positions Cys-157–Cys-196 are V2. A V3 region spans residues Cys-296–His-330. An intrachain disulfide couples Cys-296 to Cys-331. The interval Ser-364 to His-374 is CD4-binding loop. Intrachain disulfides connect Cys-378–Cys-440 and Cys-385–Cys-413. The tract at residues Cys-385 to Cys-413 is V4. N-linked (GlcNAc...) asparagine; by host glycans are attached at residues Asn-386, Asn-392, Asn-401, Asn-443, and Asn-458. 2 V5 regions span residues Ser-456 to Gly-466 and Asn-458 to Gly-466. The interval Ala-507 to Ala-527 is fusion peptide. Residues Lys-569–Leu-587 are immunosuppression. The cysteines at positions 593 and 599 are disulfide-linked. 5 N-linked (GlcNAc...) asparagine; by host glycosylation sites follow: Asn-606, Asn-611, Asn-620, Asn-632, and Asn-669. A coiled-coil region spans residues Arg-628–Ala-662. An MPER; binding to GalCer region spans residues Glu-657 to Lys-678. The chain crosses the membrane as a helical span at residues Phe-680–Val-700. Residues Asn-701 to Leu-851 lie on the Cytoplasmic side of the membrane. The YXXL motif; contains endocytosis signal signature appears at Tyr-707–Leu-710. Positions Gln-713 to Arg-735 are disordered. Cys-759 carries S-palmitoyl cysteine; by host lipidation. A Di-leucine internalization motif motif is present at residues Leu-850 to Leu-851.

Belongs to the HIV-1 env protein family. As to quaternary structure, the mature envelope protein (Env) consists of a homotrimer of non-covalently associated gp120-gp41 heterodimers. The resulting complex protrudes from the virus surface as a spike. There seems to be as few as 10 spikes on the average virion. Interacts with host CD4, CCR5 and CXCR4. Gp120 also interacts with the C-type lectins CD209/DC-SIGN and CLEC4M/DC-SIGNR (collectively referred to as DC-SIGN(R)). Gp120 and gp41 interact with GalCer. Gp120 interacts with host ITGA4/ITGB7 complex; on CD4+ T-cells, this interaction results in rapid activation of integrin ITGAL/LFA-1, which facilitates efficient cell-to-cell spreading of HIV-1. Gp120 interacts with cell-associated heparan sulfate; this interaction increases virus infectivity on permissive cells and may be involved in infection of CD4- cells. In terms of assembly, the mature envelope protein (Env) consists of a homotrimer of non-covalently associated gp120-gp41 heterodimers. The resulting complex protrudes from the virus surface as a spike. There seems to be as few as 10 spikes on the average virion. Post-translationally, highly glycosylated by host. The high number of glycan on the protein is reffered to as 'glycan shield' because it contributes to hide protein sequence from adaptive immune system. Palmitoylation of the transmembrane protein and of Env polyprotein (prior to its proteolytic cleavage) is essential for their association with host cell membrane lipid rafts. Palmitoylation is therefore required for envelope trafficking to classical lipid rafts, but not for viral replication. In terms of processing, specific enzymatic cleavages in vivo yield mature proteins. Envelope glycoproteins are synthesized as an inactive precursor that is heavily N-glycosylated and processed likely by host cell furin in the Golgi to yield the mature SU and TM proteins. The cleavage site between SU and TM requires the minimal sequence [KR]-X-[KR]-R. About 2 of the 9 disulfide bonds of gp41 are reduced by P4HB/PDI, following binding to CD4 receptor.

The protein resides in the virion membrane. It is found in the host cell membrane. The protein localises to the host endosome membrane. Functionally, oligomerizes in the host endoplasmic reticulum into predominantly trimers. In a second time, gp160 transits in the host Golgi, where glycosylation is completed. The precursor is then proteolytically cleaved in the trans-Golgi and thereby activated by cellular furin or furin-like proteases to produce gp120 and gp41. In terms of biological role, attaches the virus to the host lymphoid cell by binding to the primary receptor CD4. This interaction induces a structural rearrangement creating a high affinity binding site for a chemokine coreceptor like CXCR4 and/or CCR5. Acts as a ligand for CD209/DC-SIGN and CLEC4M/DC-SIGNR, which are respectively found on dendritic cells (DCs), and on endothelial cells of liver sinusoids and lymph node sinuses. These interactions allow capture of viral particles at mucosal surfaces by these cells and subsequent transmission to permissive cells. HIV subverts the migration properties of dendritic cells to gain access to CD4+ T-cells in lymph nodes. Virus transmission to permissive T-cells occurs either in trans (without DCs infection, through viral capture and transmission), or in cis (following DCs productive infection, through the usual CD4-gp120 interaction), thereby inducing a robust infection. In trans infection, bound virions remain infectious over days and it is proposed that they are not degraded, but protected in non-lysosomal acidic organelles within the DCs close to the cell membrane thus contributing to the viral infectious potential during DCs' migration from the periphery to the lymphoid tissues. On arrival at lymphoid tissues, intact virions recycle back to DCs' cell surface allowing virus transmission to CD4+ T-cells. Acts as a class I viral fusion protein. Under the current model, the protein has at least 3 conformational states: pre-fusion native state, pre-hairpin intermediate state, and post-fusion hairpin state. During fusion of viral and target intracellular membranes, the coiled coil regions (heptad repeats) assume a trimer-of-hairpins structure, positioning the fusion peptide in close proximity to the C-terminal region of the ectodomain. The formation of this structure appears to drive apposition and subsequent fusion of viral and target cell membranes. Complete fusion occurs in host cell endosomes and is dynamin-dependent, however some lipid transfer might occur at the plasma membrane. The virus undergoes clathrin-dependent internalization long before endosomal fusion, thus minimizing the surface exposure of conserved viral epitopes during fusion and reducing the efficacy of inhibitors targeting these epitopes. Membranes fusion leads to delivery of the nucleocapsid into the cytoplasm. This chain is Envelope glycoprotein gp160, found in Homo sapiens (Human).